The primary structure comprises 236 residues: ATP synthase subunit a (236 aa).

5 consecutive transmembrane segments (helical) span residues tryptophan 17–leucine 37, serine 76–isoleucine 96, proline 113–alanine 133, isoleucine 170–serine 190, and methionine 196–isoleucine 216.

It belongs to the ATPase A chain family. F-type ATPases have 2 components, CF(1) - the catalytic core - and CF(0) - the membrane proton channel. CF(1) has five subunits: alpha(3), beta(3), gamma(1), delta(1), epsilon(1). CF(0) has three main subunits: a(1), b(2) and c(9-12). The alpha and beta chains form an alternating ring which encloses part of the gamma chain. CF(1) is attached to CF(0) by a central stalk formed by the gamma and epsilon chains, while a peripheral stalk is formed by the delta and b chains.

It is found in the cell membrane. Key component of the proton channel; it plays a direct role in the translocation of protons across the membrane. This is ATP synthase subunit a from Limosilactobacillus fermentum (strain NBRC 3956 / LMG 18251) (Lactobacillus fermentum).